Here is a 122-residue protein sequence, read N- to C-terminus: LOB domain-containing protein 5 (122 aa).

An LOB domain is found at 8 to 109; the sequence is RPCSVCITKN…AYLRELQEKI (102 aa).

The protein belongs to the LOB domain-containing protein family.

This Arabidopsis thaliana (Mouse-ear cress) protein is LOB domain-containing protein 5 (LBD5).